The primary structure comprises 152 residues: 6,7-dimethyl-8-ribityllumazine synthase (152 aa).

5-amino-6-(D-ribitylamino)uracil is bound by residues Phe18, 49–51 (ALE), and 75–77 (CVI). 80–81 (ET) provides a ligand contact to (2S)-2-hydroxy-3-oxobutyl phosphate. Residue His83 is the Proton donor of the active site. Asn108 contacts 5-amino-6-(D-ribitylamino)uracil. Position 122 (Arg122) interacts with (2S)-2-hydroxy-3-oxobutyl phosphate.

It belongs to the DMRL synthase family.

It catalyses the reaction (2S)-2-hydroxy-3-oxobutyl phosphate + 5-amino-6-(D-ribitylamino)uracil = 6,7-dimethyl-8-(1-D-ribityl)lumazine + phosphate + 2 H2O + H(+). Its pathway is cofactor biosynthesis; riboflavin biosynthesis; riboflavin from 2-hydroxy-3-oxobutyl phosphate and 5-amino-6-(D-ribitylamino)uracil: step 1/2. Functionally, catalyzes the formation of 6,7-dimethyl-8-ribityllumazine by condensation of 5-amino-6-(D-ribitylamino)uracil with 3,4-dihydroxy-2-butanone 4-phosphate. This is the penultimate step in the biosynthesis of riboflavin. In Bartonella bacilliformis (strain ATCC 35685 / KC583 / Herrer 020/F12,63), this protein is 6,7-dimethyl-8-ribityllumazine synthase.